Reading from the N-terminus, the 499-residue chain is Cysteine--tRNA ligase (499 aa).

C31 contacts Zn(2+). The 'HIGH' region signature appears at 33–43; sequence VTVYDLCHLGH. Zn(2+)-binding residues include C215, H240, and E244. The short motif at 272–276 is the 'KMSKS' region element; the sequence is KMSKS. Residue K275 participates in ATP binding.

The protein belongs to the class-I aminoacyl-tRNA synthetase family. Monomer. It depends on Zn(2+) as a cofactor.

The protein localises to the cytoplasm. The enzyme catalyses tRNA(Cys) + L-cysteine + ATP = L-cysteinyl-tRNA(Cys) + AMP + diphosphate. In Synechococcus sp. (strain WH7803), this protein is Cysteine--tRNA ligase.